Reading from the N-terminus, the 148-residue chain is MQVILLDKIAKLGGLGDQVAVKAGYARNYLIPQGKAVMATKANIETFDARRAELEAKLAAGKAAAEERAAKLGELAAVVIASKAGDEGKLFGSIGTRDVADAITAAGVAVAKSEVRMGNVLRNTGEYEVVVQLHADVKATVQVQVVAL.

This sequence belongs to the bacterial ribosomal protein bL9 family.

Functionally, binds to the 23S rRNA. This Aeromonas salmonicida (strain A449) protein is Large ribosomal subunit protein bL9.